Reading from the N-terminus, the 137-residue chain is Small ribosomal subunit protein uS12 (137 aa).

Residues 1–57 are disordered; the sequence is MPTINQLVRKPRRAQVTKSKSPAMNVGYNSRKKVQTKLASPQKRGVATRVGTMTPKK. Residue D102 is modified to 3-methylthioaspartic acid.

It belongs to the universal ribosomal protein uS12 family. Part of the 30S ribosomal subunit. Contacts proteins S8 and S17. May interact with IF1 in the 30S initiation complex.

In terms of biological role, with S4 and S5 plays an important role in translational accuracy. Its function is as follows. Interacts with and stabilizes bases of the 16S rRNA that are involved in tRNA selection in the A site and with the mRNA backbone. Located at the interface of the 30S and 50S subunits, it traverses the body of the 30S subunit contacting proteins on the other side and probably holding the rRNA structure together. The combined cluster of proteins S8, S12 and S17 appears to hold together the shoulder and platform of the 30S subunit. This Lactococcus lactis subsp. lactis (strain IL1403) (Streptococcus lactis) protein is Small ribosomal subunit protein uS12.